The primary structure comprises 163 residues: Nitrogen regulatory protein (163 aa).

The PTS EIIA type-2 domain maps to 12-156 (SVLNRECTRS…EELYQIITDT (145 aa)). His73 (tele-phosphohistidine intermediate) is an active-site residue.

Its subcellular location is the cytoplasm. In terms of biological role, seems to have a role in regulating nitrogen assimilation. This is Nitrogen regulatory protein (ptsN) from Escherichia coli (strain K12).